The sequence spans 310 residues: uncharacterized protein (310 aa).

Transmembrane regions (helical) follow at residues 1–21, 38–58, 74–94, 110–130, 135–155, 194–214, 228–248, 256–276, and 284–304; these read MIYFFISSLFFLILITLMFSK, FFFYFLLFVLFIFIFWLVVYT, TSYFLEILLSIDNVFAWFFIF, YGLWGALILRSIFSFSGSFLF, WILYLFGGFFILTSLKFIFFS, IFITPLFVSLILIELSDIVFS, LFIIFSSNFFAVLGLRSMYLF, FPIMKYALSLILMFIGFKILI, and IFLTLAVILIILITTFLINLI.

Belongs to the TerC family.

The protein localises to the cell membrane. This is an uncharacterized protein from Buchnera aphidicola subsp. Schizaphis graminum (strain Sg).